We begin with the raw amino-acid sequence, 434 residues long: Gamma-glutamyl phosphate reductase (434 aa).

This sequence belongs to the gamma-glutamyl phosphate reductase family.

The protein resides in the cytoplasm. It carries out the reaction L-glutamate 5-semialdehyde + phosphate + NADP(+) = L-glutamyl 5-phosphate + NADPH + H(+). It functions in the pathway amino-acid biosynthesis; L-proline biosynthesis; L-glutamate 5-semialdehyde from L-glutamate: step 2/2. Catalyzes the NADPH-dependent reduction of L-glutamate 5-phosphate into L-glutamate 5-semialdehyde and phosphate. The product spontaneously undergoes cyclization to form 1-pyrroline-5-carboxylate. This Trichormus variabilis (strain ATCC 29413 / PCC 7937) (Anabaena variabilis) protein is Gamma-glutamyl phosphate reductase.